The primary structure comprises 179 residues: Large ribosomal subunit protein uL5 (179 aa).

It belongs to the universal ribosomal protein uL5 family. In terms of assembly, part of the 50S ribosomal subunit; part of the 5S rRNA/L5/L18/L25 subcomplex. Contacts the 5S rRNA and the P site tRNA. Forms a bridge to the 30S subunit in the 70S ribosome.

Its function is as follows. This is one of the proteins that bind and probably mediate the attachment of the 5S RNA into the large ribosomal subunit, where it forms part of the central protuberance. In the 70S ribosome it contacts protein S13 of the 30S subunit (bridge B1b), connecting the 2 subunits; this bridge is implicated in subunit movement. Contacts the P site tRNA; the 5S rRNA and some of its associated proteins might help stabilize positioning of ribosome-bound tRNAs. In Neisseria meningitidis serogroup A / serotype 4A (strain DSM 15465 / Z2491), this protein is Large ribosomal subunit protein uL5.